The following is an 84-amino-acid chain: Putative defensin-like protein 114 (84 aa).

The signal sequence occupies residues 1 to 24 (MAITKKCFAAFVLILLFVMPFVYC). Intrachain disulfides connect C41-C81, C47-C69, C54-C79, and C58-C80.

The protein belongs to the DEFL family.

It localises to the secreted. This is Putative defensin-like protein 114 from Arabidopsis thaliana (Mouse-ear cress).